The following is a 391-amino-acid chain: Probable acridone synthase 3 (391 aa).

Residue cysteine 164 is part of the active site.

The protein belongs to the thiolase-like superfamily. Chalcone/stilbene synthases family.

The enzyme catalyses N-methylanthraniloyl-CoA + 3 malonyl-CoA + 3 H(+) = 1,3-dihydroxy-N-methylacridone + 3 CO2 + 4 CoA + H2O. The protein is Probable acridone synthase 3 (ACS3) of Ruta graveolens (Common rue).